The chain runs to 329 residues: L-threonine dehydratase catabolic TdcB (329 aa).

Position 53 to 54 (53 to 54 (RT)) interacts with AMP. Lys58 is subject to N6-(pyridoxal phosphate)lysine. AMP-binding positions include Gln88, 119–120 (DY), and Asn314.

This sequence belongs to the serine/threonine dehydratase family. In the native structure, TdcB is in a dimeric form, whereas in the TdcB-AMP complex, it exists in a tetrameric form (dimer of dimers). It depends on pyridoxal 5'-phosphate as a cofactor.

It carries out the reaction L-threonine = 2-oxobutanoate + NH4(+). It catalyses the reaction L-serine = pyruvate + NH4(+). It functions in the pathway amino-acid degradation; L-threonine degradation via propanoate pathway; propanoate from L-threonine: step 1/4. Its activity is regulated as follows. Each protein molecule can bind up to four molecules of AMP, which act as an allosteric activator to the enzyme. Catalyzes the anaerobic formation of alpha-ketobutyrate and ammonia from threonine in a two-step reaction. The first step involved a dehydration of threonine and a production of enamine intermediates (aminocrotonate), which tautomerizes to its imine form (iminobutyrate). Both intermediates are unstable and short-lived. The second step is the nonenzymatic hydrolysis of the enamine/imine intermediates to form 2-ketobutyrate and free ammonia. In the low water environment of the cell, the second step is accelerated by RidA. TdcB also dehydrates serine to yield pyruvate via analogous enamine/imine intermediates. This is L-threonine dehydratase catabolic TdcB (tdcB) from Escherichia coli O157:H7.